Here is a 103-residue protein sequence, read N- to C-terminus: Sec-independent protein translocase protein TatA (103 aa).

Residues 1 to 21 (MGNIFSPTHLIIILLLILLLF) form a helical membrane-spanning segment. A disordered region spans residues 48–103 (EESIEDKVEMADTSQVINEESQQSQPLSVKRAAIRRKASSDSKGGKASIAKKQRVK). The span at 59–74 (DTSQVINEESQQSQPL) shows a compositional bias: polar residues.

Belongs to the TatA/E family. In terms of assembly, the Tat system comprises two distinct complexes: a TatABC complex, containing multiple copies of TatA, TatB and TatC subunits, and a separate TatA complex, containing only TatA subunits. Substrates initially bind to the TatABC complex, which probably triggers association of the separate TatA complex to form the active translocon.

The protein localises to the cell inner membrane. In terms of biological role, part of the twin-arginine translocation (Tat) system that transports large folded proteins containing a characteristic twin-arginine motif in their signal peptide across membranes. TatA could form the protein-conducting channel of the Tat system. This is Sec-independent protein translocase protein TatA from Bartonella tribocorum (strain CIP 105476 / IBS 506).